Here is a 398-residue protein sequence, read N- to C-terminus: 8-amino-7-oxononanoate synthase (398 aa).

Arginine 23 contacts substrate. 110 to 111 (GY) contributes to the pyridoxal 5'-phosphate binding site. Histidine 135 serves as a coordination point for substrate. Pyridoxal 5'-phosphate is bound by residues serine 181, histidine 209, and threonine 237. Lysine 240 carries the N6-(pyridoxal phosphate)lysine modification. Threonine 354 lines the substrate pocket.

It belongs to the class-II pyridoxal-phosphate-dependent aminotransferase family. BioF subfamily. Homodimer. Pyridoxal 5'-phosphate serves as cofactor.

The enzyme catalyses 6-carboxyhexanoyl-[ACP] + L-alanine + H(+) = (8S)-8-amino-7-oxononanoate + holo-[ACP] + CO2. The protein operates within cofactor biosynthesis; biotin biosynthesis. Its function is as follows. Catalyzes the decarboxylative condensation of pimeloyl-[acyl-carrier protein] and L-alanine to produce 8-amino-7-oxononanoate (AON), [acyl-carrier protein], and carbon dioxide. This chain is 8-amino-7-oxononanoate synthase, found in Anaeromyxobacter dehalogenans (strain 2CP-1 / ATCC BAA-258).